A 958-amino-acid polypeptide reads, in one-letter code: Translation initiation factor IF-2 (958 aa).

Residues 50–67 (FKPAAAPKVEAKPAAPKV) show a composition bias toward low complexity. Disordered regions lie at residues 50-224 (FKPA…RIDF) and 288-374 (EVVP…HELP). Basic and acidic residues-rich tracts occupy residues 68-89 (SAEK…EEAK), 96-118 (SAEK…EAKP), and 138-153 (FKAE…AERR). Residues 157-169 (KGNNRDQQQNGNR) are compositionally biased toward low complexity. Composition is skewed to basic and acidic residues over residues 185–195 (RDNRRFNDQAK) and 290–323 (VPEK…DGPR). Low complexity predominate over residues 337 to 346 (NQKNSNWNNN). The segment covering 365–374 (VTERKFHELP) has biased composition (basic and acidic residues). The tr-type G domain maps to 460–627 (ERPPVVTIMG…TVLLVAEIQE (168 aa)). Residues 469 to 476 (GHVDHGKT) form a G1 region. 469–476 (GHVDHGKT) provides a ligand contact to GTP. A G2 region spans residues 494 to 498 (GITQH). The tract at residues 515–518 (DTPG) is G3. Residues 515–519 (DTPGH) and 569–572 (NKID) each bind GTP. The interval 569–572 (NKID) is G4. The segment at 605 to 607 (SAK) is G5.

Belongs to the TRAFAC class translation factor GTPase superfamily. Classic translation factor GTPase family. IF-2 subfamily.

The protein localises to the cytoplasm. One of the essential components for the initiation of protein synthesis. Protects formylmethionyl-tRNA from spontaneous hydrolysis and promotes its binding to the 30S ribosomal subunits. Also involved in the hydrolysis of GTP during the formation of the 70S ribosomal complex. The sequence is that of Translation initiation factor IF-2 from Streptococcus pneumoniae serotype 4 (strain ATCC BAA-334 / TIGR4).